The chain runs to 600 residues: Epidermal growth factor receptor kinase substrate 8-like protein 3 (600 aa).

A PTB domain is found at 28–155; it reads QHRVEHLMTC…ALEEELEERP (128 aa). Disordered stretches follow at residues 152–245 and 429–452; these read EERP…PERD and LHFP…PLSS. The segment covering 204-214 has biased composition (low complexity); that stretch reads SERSISPSSRS. Ser238 is modified (phosphoserine). Residues 457-516 enclose the SH3 domain; it reads RAALKMQVLYEFEARNAQELTVAQGEILEVLDQSKRWWLVKNEAGLTGYIPSNILEPLPA.

The protein belongs to the EPS8 family. In terms of assembly, interacts with ABI1. Part of a complex that contains SOS1, ABI1 and EPS8L2. Interacts with FASLG. In terms of tissue distribution, detected in embryonic gut. Detected in adult testis, placenta, adrenal gland and intestine.

The protein resides in the cytoplasm. The polypeptide is Epidermal growth factor receptor kinase substrate 8-like protein 3 (Eps8l3) (Mus musculus (Mouse)).